A 218-amino-acid chain; its full sequence is Small ribosomal subunit protein uS3 (218 aa).

Residues 38–106 (LRNDLKKKLM…PVHLNIEEVK (69 aa)) enclose the KH type-2 domain.

This sequence belongs to the universal ribosomal protein uS3 family. As to quaternary structure, part of the 30S ribosomal subunit. Forms a tight complex with proteins S10 and S14.

Functionally, binds the lower part of the 30S subunit head. Binds mRNA in the 70S ribosome, positioning it for translation. This chain is Small ribosomal subunit protein uS3, found in Legionella pneumophila (strain Paris).